We begin with the raw amino-acid sequence, 675 residues long: DNA ligase (675 aa).

NAD(+)-binding positions include 41 to 45, 90 to 91, and Glu-120; these read DAEYD and SL. The N6-AMP-lysine intermediate role is filled by Lys-122. Arg-143, Glu-178, Lys-295, and Lys-319 together coordinate NAD(+). 4 residues coordinate Zn(2+): Cys-413, Cys-416, Cys-431, and Cys-436. The 80-residue stretch at 596-675 folds into the BRCT domain; that stretch reads GVPQTFAGKT…ADFLQLIDRV (80 aa).

This sequence belongs to the NAD-dependent DNA ligase family. LigA subfamily. Mg(2+) is required as a cofactor. Requires Mn(2+) as cofactor.

The catalysed reaction is NAD(+) + (deoxyribonucleotide)n-3'-hydroxyl + 5'-phospho-(deoxyribonucleotide)m = (deoxyribonucleotide)n+m + AMP + beta-nicotinamide D-nucleotide.. DNA ligase that catalyzes the formation of phosphodiester linkages between 5'-phosphoryl and 3'-hydroxyl groups in double-stranded DNA using NAD as a coenzyme and as the energy source for the reaction. It is essential for DNA replication and repair of damaged DNA. The chain is DNA ligase from Heliobacterium modesticaldum (strain ATCC 51547 / Ice1).